We begin with the raw amino-acid sequence, 181 residues long: Probable pyruvoyl-dependent arginine decarboxylase (181 aa).

Pyruvic acid (Ser) is present on Ser43.

The protein belongs to the PdaD family. Requires pyruvate as cofactor.

It carries out the reaction L-arginine + H(+) = agmatine + CO2. The protein is Probable pyruvoyl-dependent arginine decarboxylase of Chlorobium luteolum (strain DSM 273 / BCRC 81028 / 2530) (Pelodictyon luteolum).